The sequence spans 353 residues: Stomatin-like protein 2, mitochondrial (353 aa).

The N-terminal 28 residues, 1–28, are a transit peptide targeting the mitochondrion; the sequence is MLARAARGTGALLLRGSVQASGRVPRRA. At Ser-17 the chain carries Phosphoserine; by PKC/PRKCZ. Phosphotyrosine is present on Tyr-124. Lys-145 carries the N6-acetyllysine; alternate modification. The residue at position 145 (Lys-145) is an N6-succinyllysine; alternate. Residues 215–252 are a coiled coil; the sequence is INVAEGKKQAQILASEAEKAEQINQAAGEASAVLAKAK. Residue Lys-233 is modified to N6-acetyllysine. The tract at residues 324-353 is disordered; sequence VPGAQNSSQSRRDVQATDTSIEELGRVKLS. Phosphoserine is present on Ser-330.

It belongs to the band 7/mec-2 family. As to quaternary structure, forms homooligomers. Interacts with MFN2; may form heterooligomers. Interacts with PHB1 and PHB2; recruits them to cardiolipin-enriched mitochondrial membranes and stabilizes them. Interacts with CACNA2D2.

Its subcellular location is the cell membrane. The protein resides in the mitochondrion. It is found in the mitochondrion inner membrane. It localises to the mitochondrion intermembrane space. The protein localises to the membrane raft. Its subcellular location is the cytoplasm. The protein resides in the cytoskeleton. Its function is as follows. Mitochondrial protein that probably regulates the biogenesis and the activity of mitochondria. Stimulates cardiolipin biosynthesis, binds cardiolipin-enriched membranes where it recruits and stabilizes some proteins including prohibitin and may therefore act in the organization of functional microdomains in mitochondrial membranes. Through regulation of the mitochondrial function may play a role into several biological processes including cell migration, cell proliferation, T-cell activation, calcium homeostasis and cellular response to stress. May play a role in calcium homeostasis through negative regulation of calcium efflux from mitochondria. Required for mitochondrial hyperfusion a pro-survival cellular response to stress which results in increased ATP production by mitochondria. May also regulate the organization of functional domains at the plasma membrane and play a role in T-cell activation through association with the T-cell receptor signaling complex and its regulation. This chain is Stomatin-like protein 2, mitochondrial (Stoml2), found in Mus musculus (Mouse).